We begin with the raw amino-acid sequence, 419 residues long: Innexin-2 (419 aa).

Transmembrane regions (helical) follow at residues 33 to 53 (AWFT…KQYF), 108 to 128 (PLVL…WNLF), 184 to 204 (INYF…MVLL), and 270 to 290 (LYIC…AGMI).

This sequence belongs to the pannexin family.

Its subcellular location is the cell membrane. The protein resides in the cell junction. It is found in the gap junction. In terms of biological role, structural component of the gap junctions. The protein is Innexin-2 (inx-2) of Caenorhabditis elegans.